The following is a 410-amino-acid chain: Arginine deiminase (410 aa).

The active-site Amidino-cysteine intermediate is the Cys400.

This sequence belongs to the arginine deiminase family.

It localises to the cytoplasm. The catalysed reaction is L-arginine + H2O = L-citrulline + NH4(+). Its pathway is amino-acid degradation; L-arginine degradation via ADI pathway; carbamoyl phosphate from L-arginine: step 1/2. The polypeptide is Arginine deiminase (Bacillus thuringiensis subsp. konkukian (strain 97-27)).